Consider the following 231-residue polypeptide: 5'-methylthioadenosine/S-adenosylhomocysteine nucleosidase (231 aa).

Glu-12 functions as the Proton acceptor in the catalytic mechanism. Residues Gly-78, Met-153, and 174-175 (ME) contribute to the substrate site. Asp-198 functions as the Proton donor in the catalytic mechanism.

This sequence belongs to the PNP/UDP phosphorylase family. MtnN subfamily.

It catalyses the reaction S-adenosyl-L-homocysteine + H2O = S-(5-deoxy-D-ribos-5-yl)-L-homocysteine + adenine. It carries out the reaction S-methyl-5'-thioadenosine + H2O = 5-(methylsulfanyl)-D-ribose + adenine. The enzyme catalyses 5'-deoxyadenosine + H2O = 5-deoxy-D-ribose + adenine. Its pathway is amino-acid biosynthesis; L-methionine biosynthesis via salvage pathway; S-methyl-5-thio-alpha-D-ribose 1-phosphate from S-methyl-5'-thioadenosine (hydrolase route): step 1/2. Functionally, catalyzes the irreversible cleavage of the glycosidic bond in both 5'-methylthioadenosine (MTA) and S-adenosylhomocysteine (SAH/AdoHcy) to adenine and the corresponding thioribose, 5'-methylthioribose and S-ribosylhomocysteine, respectively. Also cleaves 5'-deoxyadenosine, a toxic by-product of radical S-adenosylmethionine (SAM) enzymes, into 5-deoxyribose and adenine. This chain is 5'-methylthioadenosine/S-adenosylhomocysteine nucleosidase, found in Bacillus licheniformis (strain ATCC 14580 / DSM 13 / JCM 2505 / CCUG 7422 / NBRC 12200 / NCIMB 9375 / NCTC 10341 / NRRL NRS-1264 / Gibson 46).